A 342-amino-acid polypeptide reads, in one-letter code: 4-hydroxy-2-oxovalerate aldolase (342 aa).

In terms of domain architecture, Pyruvate carboxyltransferase spans 8-260; that stretch reads ITVHDMTLRD…ATGVDLFKMQ (253 aa). Position 16–17 (16–17) interacts with substrate; that stretch reads RD. Asp17 provides a ligand contact to Mn(2+). His20 serves as the catalytic Proton acceptor. The substrate site is built by Ser170 and His199. Mn(2+)-binding residues include His199 and His201. Tyr290 lines the substrate pocket.

This sequence belongs to the 4-hydroxy-2-oxovalerate aldolase family.

It carries out the reaction (S)-4-hydroxy-2-oxopentanoate = acetaldehyde + pyruvate. In Albidiferax ferrireducens (strain ATCC BAA-621 / DSM 15236 / T118) (Rhodoferax ferrireducens), this protein is 4-hydroxy-2-oxovalerate aldolase.